We begin with the raw amino-acid sequence, 97 residues long: Aspartyl/glutamyl-tRNA(Asn/Gln) amidotransferase subunit C (97 aa).

It belongs to the GatC family. As to quaternary structure, heterotrimer of A, B and C subunits.

It carries out the reaction L-glutamyl-tRNA(Gln) + L-glutamine + ATP + H2O = L-glutaminyl-tRNA(Gln) + L-glutamate + ADP + phosphate + H(+). It catalyses the reaction L-aspartyl-tRNA(Asn) + L-glutamine + ATP + H2O = L-asparaginyl-tRNA(Asn) + L-glutamate + ADP + phosphate + 2 H(+). Allows the formation of correctly charged Asn-tRNA(Asn) or Gln-tRNA(Gln) through the transamidation of misacylated Asp-tRNA(Asn) or Glu-tRNA(Gln) in organisms which lack either or both of asparaginyl-tRNA or glutaminyl-tRNA synthetases. The reaction takes place in the presence of glutamine and ATP through an activated phospho-Asp-tRNA(Asn) or phospho-Glu-tRNA(Gln). This Prochlorococcus marinus (strain MIT 9515) protein is Aspartyl/glutamyl-tRNA(Asn/Gln) amidotransferase subunit C.